The sequence spans 187 residues: Large ribosomal subunit protein bL25 (187 aa).

This sequence belongs to the bacterial ribosomal protein bL25 family. CTC subfamily. In terms of assembly, part of the 50S ribosomal subunit; part of the 5S rRNA/L5/L18/L25 subcomplex. Contacts the 5S rRNA. Binds to the 5S rRNA independently of L5 and L18.

In terms of biological role, this is one of the proteins that binds to the 5S RNA in the ribosome where it forms part of the central protuberance. The chain is Large ribosomal subunit protein bL25 from Tropheryma whipplei (strain TW08/27) (Whipple's bacillus).